The primary structure comprises 106 residues: Integration host factor subunit alpha (106 aa).

The protein belongs to the bacterial histone-like protein family. Heterodimer of an alpha and a beta chain.

Functionally, this protein is one of the two subunits of integration host factor, a specific DNA-binding protein that functions in genetic recombination as well as in transcriptional and translational control. The protein is Integration host factor subunit alpha of Paramagnetospirillum magneticum (strain ATCC 700264 / AMB-1) (Magnetospirillum magneticum).